The following is a 484-amino-acid chain: Toluene efflux pump outer membrane protein TtgC (484 aa).

The first 17 residues, 1–17 (MTKSLLSLAVTAFILGG), serve as a signal peptide directing secretion. A lipid anchor (N-palmitoyl cysteine) is attached at Cys18. Cys18 carries the S-diacylglycerol cysteine lipid modification.

The protein belongs to the outer membrane factor (OMF) (TC 1.B.17) family.

It localises to the cell outer membrane. In terms of biological role, the outer membrane component of a constitutive organic solvent efflux system. Is involved in export of toluene, styrene, m-xylene, propylbenzene and ethylbenzene. Also exports AMP and the antibiotics carbenicillin, nalidixic acid, chloramphenicol and tetracycline. This is Toluene efflux pump outer membrane protein TtgC (ttgC) from Pseudomonas putida (strain DOT-T1E).